The chain runs to 815 residues: Plakophilin-2 (815 aa).

A compositionally biased stretch (basic and acidic residues) spans 1–12; it reads MLKPHPEHKEQP. 2 disordered regions span residues 1–31 and 76–105; these read MLKP…MAEE and QLTL…ISSS. The segment covering 13 to 25 has biased composition (polar residues); it reads QDSFTPSGDSTPD. The span at 91–105 shows a compositional bias: low complexity; it reads SSLAESQSSCQISSS. ARM repeat units lie at residues 317 to 357, 360 to 399, 402 to 442, 457 to 498, 501 to 547, 604 to 644, 652 to 691, 693 to 737, and 740 to 783; these read KGKP…NQCF, PDAK…NIVF, NENK…NLSS, PLTD…NLSS, PDGR…NLSY, PHGV…NLTA, AIAH…NISR, RELH…NLSQ, and ASNT…TLWR.

The protein belongs to the beta-catenin family.

It localises to the nucleus. The protein resides in the cell junction. Its subcellular location is the desmosome. It is found in the cytoplasm. Required for development of the heart, potentially via cell-cell adhesion and modulation of expression of cardiac precursor genes. Plays a role in desmosome cell-cell junctions and their intracellular connectivity. In Danio rerio (Zebrafish), this protein is Plakophilin-2.